The sequence spans 367 residues: METKESTMNDQNTHTRSRNKAIPYLPRYMKPGQPCVVCGDDATGLHYRAITCEGCKGFFRRTVQQKIVYKCKSIERCEISKISRNICQFCRFQKCLRNGMTKSLVLNETERIAKRKMIIDNRERRKLEHLRTLLKASSLADKQDEFQSRIDQVTANYCKIMDNSLEYKFKSNKKSERLIELTKLVSQQVRQFAETIEICDTLNPSEKEEIIAKSWLVVKILQIIHEFNPTECCLMLANNTTYIPAKGNYSELDKTTKIFENLINLAISFNCMQLDNRQLALLSALLIYNPENVKRSKEKIDKIHVELWKCLQSISEMHDDDSSDLLHWPNFLVRIPYLILTVSKMQDFFQDENNINAIANILLFKFT.

The segment at residues 32 to 107 (GQPCVVCGDD…NGMTKSLVLN (76 aa)) is a DNA-binding region (nuclear receptor). NR C4-type zinc fingers lie at residues 35 to 55 (CVVC…CEGC) and 71 to 95 (CKSI…FQKC). The NR LBD domain maps to 145 to 367 (EFQSRIDQVT…IANILLFKFT (223 aa)).

The protein belongs to the nuclear hormone receptor family.

Its subcellular location is the nucleus. The chain is Nuclear hormone receptor-like 1 (nhr-1) from Onchocerca volvulus.